A 192-amino-acid chain; its full sequence is Small ribosomal subunit protein eS7 (192 aa).

It belongs to the eukaryotic ribosomal protein eS7 family.

This Anopheles gambiae (African malaria mosquito) protein is Small ribosomal subunit protein eS7 (RpS7).